We begin with the raw amino-acid sequence, 240 residues long: Uridylate kinase (240 aa).

13–16 (KASG) serves as a coordination point for ATP. Glycine 55 provides a ligand contact to UMP. Residues glycine 56 and arginine 60 each coordinate ATP. Residues aspartate 75 and 136 to 143 (TGNPFFTT) each bind UMP. Residues threonine 163, glutamine 164, tyrosine 169, and aspartate 172 each contribute to the ATP site.

Belongs to the UMP kinase family. In terms of assembly, homohexamer.

Its subcellular location is the cytoplasm. The catalysed reaction is UMP + ATP = UDP + ADP. The protein operates within pyrimidine metabolism; CTP biosynthesis via de novo pathway; UDP from UMP (UMPK route): step 1/1. Inhibited by UTP. Its function is as follows. Catalyzes the reversible phosphorylation of UMP to UDP. The sequence is that of Uridylate kinase from Mesorhizobium japonicum (strain LMG 29417 / CECT 9101 / MAFF 303099) (Mesorhizobium loti (strain MAFF 303099)).